Consider the following 403-residue polypeptide: L-lactate oxidase (403 aa).

The region spanning E21–Y375 is the FMN hydroxy acid dehydrogenase domain. Y47 provides a ligand contact to pyruvate. Residues P99–A101, S128, and Q150 contribute to the FMN site. Y152 provides a ligand contact to pyruvate. Residue T178 participates in FMN binding. 2 residues coordinate pyruvate: R187 and Y220. K246 provides a ligand contact to FMN. Pyruvate-binding residues include H270 and R273. H270 serves as the catalytic Proton acceptor. FMN contacts are provided by residues D301 to R305 and R325.

This sequence belongs to the FMN-dependent alpha-hydroxy acid dehydrogenase family. In terms of assembly, homotetramer. The cofactor is FMN.

It carries out the reaction (S)-lactate + O2 = pyruvate + H2O2. Catalyzes the oxidation of (S)-lactate (L-lactate) to pyruvate, with a reduction of O2 to H2O2. Is likely involved in the L-lactate aerobic metabolism of S.iniae that enables the bacterium to utilize L-lactate as an energy source for growth under aerobic conditions in the absence (or at low concentrations) of glucose. The protein is L-lactate oxidase of Streptococcus iniae (Streptococcus shiloi).